A 257-amino-acid polypeptide reads, in one-letter code: Gamma-secretase subunit APH-1B (257 aa).

7 helical membrane-spanning segments follow: residues valine 5 to isoleucine 25, isoleucine 32 to valine 52, tyrosine 70 to tyrosine 90, leucine 115 to asparagine 135, tyrosine 158 to phenylalanine 178, tryptophan 186 to serine 206, and leucine 213 to glycine 233.

It belongs to the APH-1 family. As to quaternary structure, probable component of the gamma-secretase complex, a complex composed of a presenilin homodimer (PSEN1 or PSEN2), nicastrin (NCSTN), APH1 (APH1A or APH1B) and PEN2. Such minimal complex is sufficient for secretase activity, although other components may exist. Interacts with PSEN1 and PSEN2.

It localises to the membrane. In terms of biological role, probable subunit of the gamma-secretase complex, an endoprotease complex that catalyzes the intramembrane cleavage of integral proteins such as Notch receptors and APP (amyloid-beta precursor protein). It probably represents a stabilizing cofactor for the presenilin homodimer that promotes the formation of a stable complex. Probably present in a minority of gamma-secretase complexes compared to APH1A. The protein is Gamma-secretase subunit APH-1B (APH1B) of Pongo abelii (Sumatran orangutan).